The following is a 1170-amino-acid chain: Probable mRNA-capping enzyme (1170 aa).

Lys-292 acts as the N6-GMP-lysine intermediate in catalysis. An mRNA cap 0 methyltransferase domain is found at 684–1007 (SNAAGMRAFN…LNRYYVFRKT (324 aa)). Residue 693 to 694 (NN) coordinates mRNA. Residues Lys-697, Gly-715, Asp-737, and 813–815 (QFT) contribute to the S-adenosyl-L-methionine site.

The protein in the N-terminal section; belongs to the dsDNA virus mRNA guanylyltransferase family. It in the C-terminal section; belongs to the class I-like SAM-binding methyltransferase superfamily. mRNA cap 0 methyltransferase family.

The protein localises to the virion. It catalyses the reaction a 5'-end triphospho-ribonucleoside in mRNA + H2O = a 5'-end diphospho-ribonucleoside in mRNA + phosphate + H(+). The enzyme catalyses a 5'-end diphospho-ribonucleoside in mRNA + GTP + H(+) = a 5'-end (5'-triphosphoguanosine)-ribonucleoside in mRNA + diphosphate. The catalysed reaction is a 5'-end (5'-triphosphoguanosine)-ribonucleoside in mRNA + S-adenosyl-L-methionine = a 5'-end (N(7)-methyl 5'-triphosphoguanosine)-ribonucleoside in mRNA + S-adenosyl-L-homocysteine. Its pathway is mRNA processing; mRNA capping. Functionally, responsible for methylating the 5'-cap structure of mRNAs. The protein is Probable mRNA-capping enzyme of Acanthamoeba polyphaga mimivirus (APMV).